Reading from the N-terminus, the 257-residue chain is Pimeloyl-[acyl-carrier protein] methyl ester esterase (257 aa).

An AB hydrolase-1 domain is found at 16–240 (LVLIHGWGMN…EQASHAPFIS (225 aa)). Substrate contacts are provided by residues Trp-22, 82–83 (SL), and 143–147 (FMALQ). The Nucleophile role is filled by Ser-82. Active-site residues include Asp-207 and His-235. Residue His-235 participates in substrate binding.

It belongs to the AB hydrolase superfamily. Carboxylesterase BioH family. Monomer.

Its subcellular location is the cytoplasm. The catalysed reaction is 6-carboxyhexanoyl-[ACP] methyl ester + H2O = 6-carboxyhexanoyl-[ACP] + methanol + H(+). It participates in cofactor biosynthesis; biotin biosynthesis. Functionally, the physiological role of BioH is to remove the methyl group introduced by BioC when the pimeloyl moiety is complete. It allows to synthesize pimeloyl-ACP via the fatty acid synthetic pathway through the hydrolysis of the ester bonds of pimeloyl-ACP esters. The polypeptide is Pimeloyl-[acyl-carrier protein] methyl ester esterase (Aliivibrio fischeri (strain MJ11) (Vibrio fischeri)).